The primary structure comprises 195 residues: Protein GrpE (195 aa).

Polar residues predominate over residues 1–24; sequence MSSKEQNTPDEQVSQESEMEQGQQ. Residues 1 to 40 form a disordered region; that stretch reads MSSKEQNTPDEQVSQESEMEQGQQAEAAPETVDVVDPRDE.

Belongs to the GrpE family. Homodimer.

It localises to the cytoplasm. Functionally, participates actively in the response to hyperosmotic and heat shock by preventing the aggregation of stress-denatured proteins, in association with DnaK and GrpE. It is the nucleotide exchange factor for DnaK and may function as a thermosensor. Unfolded proteins bind initially to DnaJ; upon interaction with the DnaJ-bound protein, DnaK hydrolyzes its bound ATP, resulting in the formation of a stable complex. GrpE releases ADP from DnaK; ATP binding to DnaK triggers the release of the substrate protein, thus completing the reaction cycle. Several rounds of ATP-dependent interactions between DnaJ, DnaK and GrpE are required for fully efficient folding. This Sodalis glossinidius (strain morsitans) protein is Protein GrpE.